Reading from the N-terminus, the 105-residue chain is Pyrimidine/purine nucleoside phosphorylase (105 aa).

This sequence belongs to the nucleoside phosphorylase PpnP family.

The enzyme catalyses a purine D-ribonucleoside + phosphate = a purine nucleobase + alpha-D-ribose 1-phosphate. The catalysed reaction is adenosine + phosphate = alpha-D-ribose 1-phosphate + adenine. It catalyses the reaction cytidine + phosphate = cytosine + alpha-D-ribose 1-phosphate. It carries out the reaction guanosine + phosphate = alpha-D-ribose 1-phosphate + guanine. The enzyme catalyses inosine + phosphate = alpha-D-ribose 1-phosphate + hypoxanthine. The catalysed reaction is thymidine + phosphate = 2-deoxy-alpha-D-ribose 1-phosphate + thymine. It catalyses the reaction uridine + phosphate = alpha-D-ribose 1-phosphate + uracil. It carries out the reaction xanthosine + phosphate = alpha-D-ribose 1-phosphate + xanthine. Its function is as follows. Catalyzes the phosphorolysis of diverse nucleosides, yielding D-ribose 1-phosphate and the respective free bases. Can use uridine, adenosine, guanosine, cytidine, thymidine, inosine and xanthosine as substrates. Also catalyzes the reverse reactions. In Ralstonia nicotianae (strain ATCC BAA-1114 / GMI1000) (Ralstonia solanacearum), this protein is Pyrimidine/purine nucleoside phosphorylase.